A 203-amino-acid polypeptide reads, in one-letter code: CASP-like protein 2U2 (203 aa).

The interval 1-21 (MGGFVDDGAAGLAPSHGSSRA) is disordered. Over 1–27 (MGGFVDDGAAGLAPSHGSSRAGRGLEG) the chain is Cytoplasmic. A helical membrane pass occupies residues 28 to 48 (AGVFLRFVASLLSIAGLMLLV). Residues 49-73 (KDNQTVQQMVATEAVTLETKYSDIS) are Extracellular-facing. An N-linked (GlcNAc...) asparagine glycan is attached at N51. Residues 74 to 94 (AFVFLLYTNGLVAVYCFFLAL) traverse the membrane as a helical segment. The Cytoplasmic portion of the chain corresponds to 95–108 (ASVFSLIASARSGK). Residues 109 to 129 (LAGWVTFVLDQGLAYVLLAAA) form a helical membrane-spanning segment. The Extracellular portion of the chain corresponds to 130–163 (AASTEVLYLAENGDLKTSWAEICSQFGHFCHMAR). Residues 164 to 184 (ASIVVSFLSMLAMAVLSVMSA) form a helical membrane-spanning segment. At 185 to 203 (QQLFSKYRRPMTAKTAQDI) the chain is on the cytoplasmic side.

It belongs to the Casparian strip membrane proteins (CASP) family. In terms of assembly, homodimer and heterodimers.

It is found in the cell membrane. This chain is CASP-like protein 2U2, found in Osmunda lancea (Fern).